The sequence spans 678 residues: Electrogenic aspartate/glutamate antiporter SLC25A12, mitochondrial (678 aa).

N-acetylalanine is present on Ala2. The interval 2 to 294 is regulatory N-terminal domain; the sequence is AVKVQTTKRG…TLADIERIAP (293 aa). The Mitochondrial intermembrane portion of the chain corresponds to 2–329; that stretch reads AVKVQTTKRG…WLQIAESAYR (328 aa). The Ca(2+) site is built by Asp65, Thr67, Asp69, Leu71, and Glu76. EF-hand domains are found at residues 65-76, 86-121, 125-155, and 157-192; these read DQTKDGLISYQE, APDSMFIVAFQLFDKSGNGEVTFENVKEIFGQTIIH, PFNWDCEFIRLHFGHNRKKHLNYTEFTQFLQ, and LQLEHARQAFALKDKSKSGMISGLDFSDIMVTIRSH. The interval 295 to 310 is linker loop domain; it reads LAEGALPYNLAELQRQ. The carrier domain stretch occupies residues 320–612; sequence WLQIAESAYR…RWFYIDFGGL (293 aa). 3 Solcar repeats span residues 324-416, 424-508, and 516-604; these read AESA…VRDK, VPLP…CKLL, and VGGL…LQRW. The helical transmembrane segment at 330–347 threads the bilayer; the sequence is FTLGSVAGAVGATAVYPI. Residues 348–390 lie on the Mitochondrial matrix side of the membrane; that stretch reads DLVKTRMQNQRGSGSVVGELMYKNSFDCFKKVLRYEGFFGLYR. Residues 391 to 410 traverse the membrane as a helical segment; sequence GLIPQLIGVAPEKAIKLTVN. Topologically, residues 411 to 433 are mitochondrial intermembrane; that stretch reads DFVRDKFTRRDGSVPLPAEVLAG. The helical transmembrane segment at 434-447 threads the bilayer; that stretch reads GCAGGSQVIFTNPL. At 448–482 the chain is on the mitochondrial matrix side; sequence EIVKIRLQVAGEITTGPRVSALNVLRDLGIFGLYK. The helical transmembrane segment at 483 to 502 threads the bilayer; the sequence is GAKACFLRDIPFSAIYFPVY. Topologically, residues 503 to 521 are mitochondrial intermembrane; sequence AHCKLLLADENGHVGGLNL. Residues 522–539 traverse the membrane as a helical segment; sequence LAAGAMAGVPAASLVTPA. Residues 540–578 lie on the Mitochondrial matrix side of the membrane; sequence DVIKTRLQVAARAGQTTYSGVIDCFRKILREEGPSAFWK. Residues 579-598 traverse the membrane as a helical segment; the sequence is GTAARVFRSSPQFGVTLVTY. Topologically, residues 599–678 are mitochondrial intermembrane; sequence ELLQRWFYID…QPKAAVAATQ (80 aa). Positions 613 to 675 are C-terminal domain; sequence KPAGSEPTPK…AVVQPKAAVA (63 aa).

It belongs to the mitochondrial carrier (TC 2.A.29) family. In terms of assembly, homodimer (via N-terminus). As to expression, expressed predominantly in the heart and skeletal muscle, weakly in brain and kidney.

Its subcellular location is the mitochondrion inner membrane. The catalysed reaction is L-aspartate(in) + L-glutamate(out) + H(+)(out) = L-aspartate(out) + L-glutamate(in) + H(+)(in). It carries out the reaction 3-sulfino-L-alanine(out) + L-glutamate(in) + H(+)(in) = 3-sulfino-L-alanine(in) + L-glutamate(out) + H(+)(out). It catalyses the reaction 3-sulfino-L-alanine(out) + L-aspartate(in) = 3-sulfino-L-alanine(in) + L-aspartate(out). Activated by calcium-binding in the mitochondrial intermembrane space. Inhibited by pyridoxal 5'-phosphate, bathophenathroline, mercurials, diethyl pyrocarbonate and N-ethylmaleimide. In terms of biological role, mitochondrial electrogenic aspartate/glutamate antiporter that favors efflux of aspartate and entry of glutamate and proton within the mitochondria as part of the malate-aspartate shuttle. Also mediates the uptake of L-cysteinesulfinate (3-sulfino-L-alanine) by mitochondria in exchange of L-glutamate and proton. Can also exchange L-cysteinesulfinate with aspartate in their anionic form without any proton translocation. Lacks transport activity towards L-glutamine or gamma-aminobutyric acid (GABA). This Homo sapiens (Human) protein is Electrogenic aspartate/glutamate antiporter SLC25A12, mitochondrial.